Here is a 401-residue protein sequence, read N- to C-terminus: Nicotinate phosphoribosyltransferase (401 aa).

Residue histidine 221 is modified to Phosphohistidine; by autocatalysis.

The protein belongs to the NAPRTase family. Post-translationally, transiently phosphorylated on a His residue during the reaction cycle. Phosphorylation strongly increases the affinity for substrates and increases the rate of nicotinate D-ribonucleotide production. Dephosphorylation regenerates the low-affinity form of the enzyme, leading to product release.

The catalysed reaction is nicotinate + 5-phospho-alpha-D-ribose 1-diphosphate + ATP + H2O = nicotinate beta-D-ribonucleotide + ADP + phosphate + diphosphate. The protein operates within cofactor biosynthesis; NAD(+) biosynthesis; nicotinate D-ribonucleotide from nicotinate: step 1/1. Functionally, catalyzes the synthesis of beta-nicotinate D-ribonucleotide from nicotinate and 5-phospho-D-ribose 1-phosphate at the expense of ATP. This Pectobacterium carotovorum subsp. carotovorum (strain PC1) protein is Nicotinate phosphoribosyltransferase.